The primary structure comprises 950 residues: Defective chorion protein, FC106 isoform (950 aa).

An N-terminal signal peptide occupies residues Met-1 to Gly-19. Disordered regions lie at residues Val-23–Asn-60, Ala-184–Pro-212, and Pro-268–Tyr-294. Over residues Ala-32 to Asp-41 the composition is skewed to polar residues. The span at Pro-268–Ala-280 shows a compositional bias: low complexity. Repeat copies occupy residues Gln-493–Gln-518, Gln-519–Gln-544, Gln-545–Gln-570, Gln-571–Gln-596, and Gln-597–Gln-622. The interval Gln-493–Gln-788 is 12 X 26 AA approximate tandem repeats, Glu, Met-rich. The 6; approximate repeat unit spans residues Gln-623–Gln-652. The 7; approximate repeat unit spans residues Gln-653–Gln-680. An 8; approximate repeat occupies Gln-681–Glu-696. Residues Asp-697 to Gln-720 form a 9; approximate repeat. One copy of the 10; approximate repeat lies at Gln-721–Glu-733. The stretch at Asn-734–Gln-758 is one 11; approximate repeat. A 12; approximate repeat occupies Gln-759–Gln-788. Residues Gly-843 to Ala-875 are disordered.

In terms of processing, proteolytic cleavage of isoform FC106 generates 2 further products, S80 and S60.

Its subcellular location is the secreted. In terms of biological role, required for proper assembly of the eggshell. The polypeptide is Defective chorion protein, FC106 isoform (Drosophila melanogaster (Fruit fly)).